We begin with the raw amino-acid sequence, 119 residues long: Large ribosomal subunit protein uL24 (119 aa).

The protein belongs to the universal ribosomal protein uL24 family. In terms of assembly, part of the 50S ribosomal subunit.

In terms of biological role, one of two assembly initiator proteins, it binds directly to the 5'-end of the 23S rRNA, where it nucleates assembly of the 50S subunit. Functionally, located at the polypeptide exit tunnel on the outside of the subunit. This is Large ribosomal subunit protein uL24 from Methanococcus maripaludis (strain DSM 14266 / JCM 13030 / NBRC 101832 / S2 / LL).